The primary structure comprises 498 residues: Phosphoethanolamine N-methyltransferase 1 (498 aa).

Residues Gly-68, Arg-73, Asp-89, Asp-115, Val-116, and Asn-134 each coordinate S-adenosyl-L-homocysteine. Phosphocholine contacts are provided by Ser-167, Ser-172, Gly-173, Arg-177, and Tyr-184. Residues 253 to 254 (QY) and Tyr-262 contribute to the N-methylethanolamine phosphate site. Phosphocholine is bound at residue Tyr-262. Positions 271, 272, 298, 320, 346, 347, and 363 each coordinate S-adenosyl-L-homocysteine. Residues Tyr-394, Tyr-408, Arg-412, Tyr-414, and Lys-480 each coordinate phosphocholine. N-methylethanolamine phosphate contacts are provided by residues Tyr-394, Tyr-408, 412 to 414 (RGY), and Lys-480.

Belongs to the class I-like SAM-binding methyltransferase superfamily. PEAMT family.

The enzyme catalyses phosphoethanolamine + S-adenosyl-L-methionine = N-methylethanolamine phosphate + S-adenosyl-L-homocysteine + H(+). It carries out the reaction N-methylethanolamine phosphate + S-adenosyl-L-methionine = N,N-dimethylethanolamine phosphate + S-adenosyl-L-homocysteine + H(+). It catalyses the reaction N,N-dimethylethanolamine phosphate + S-adenosyl-L-methionine = phosphocholine + S-adenosyl-L-homocysteine + H(+). The protein operates within phospholipid metabolism; phosphatidylcholine biosynthesis; phosphocholine from phosphoethanolamine: step 1/1. Its activity is regulated as follows. Inhibited by phosphatidic acid. Its function is as follows. Involved in phosphocholine biosynthesis. Catalyzes the N-methylation of phosphoethanolamine, phosphomonomethylethanolamine and phosphodimethylethanolamine, the three methylation steps required to convert phosphoethanolamine to phosphocholine (PC). The chain is Phosphoethanolamine N-methyltransferase 1 from Triticum aestivum (Wheat).